The chain runs to 256 residues: DNA repair protein RecO (256 aa).

Belongs to the RecO family.

Functionally, involved in DNA repair and RecF pathway recombination. The chain is DNA repair protein RecO from Rhizobium johnstonii (strain DSM 114642 / LMG 32736 / 3841) (Rhizobium leguminosarum bv. viciae).